Reading from the N-terminus, the 127-residue chain is Lymphocyte antigen 6D (127 aa).

Positions Met-1–Ala-20 are cleaved as a signal peptide. Residues Leu-21–Ser-108 form the UPAR/Ly6 domain. 5 disulfides stabilise this stretch: Cys-23-Cys-45, Cys-26-Cys-32, Cys-38-Cys-63, Cys-67-Cys-86, and Cys-87-Cys-92. Ser-98 is lipidated: GPI-anchor amidated serine. Positions Ala-99–Leu-127 are cleaved as a propeptide — removed in mature form.

In terms of tissue distribution, lymphoid cells lacking Ly6d, called ALP (all-lymphoid progenitor), retain full lymphoid potential and early thymic seeding activity, whereas cells containing Ly6d, called BLP (B-cell-biased lymphoid progenitor), up-regulate the B-cell specifying factors Ebf1 and Pax5 and behave essentially as B-cell progenitors (at protein level). Thymocytes and B-cells.

It localises to the cell membrane. Functionally, may act as a specification marker at earliest stage specification of lymphocytes between B- and T-cell development. Marks the earliest stage of B-cell specification. The protein is Lymphocyte antigen 6D (Ly6d) of Mus musculus (Mouse).